The chain runs to 216 residues: Peptide methionine sulfoxide reductase MsrA (216 aa).

Residue C54 is part of the active site.

The protein belongs to the MsrA Met sulfoxide reductase family.

The enzyme catalyses L-methionyl-[protein] + [thioredoxin]-disulfide + H2O = L-methionyl-(S)-S-oxide-[protein] + [thioredoxin]-dithiol. It catalyses the reaction [thioredoxin]-disulfide + L-methionine + H2O = L-methionine (S)-S-oxide + [thioredoxin]-dithiol. Has an important function as a repair enzyme for proteins that have been inactivated by oxidation. Catalyzes the reversible oxidation-reduction of methionine sulfoxide in proteins to methionine. The sequence is that of Peptide methionine sulfoxide reductase MsrA from Xylella fastidiosa (strain M12).